The sequence spans 209 residues: Mitotic spindle checkpoint protein MAD2 (209 aa).

Residues 15–198 enclose the HORMA domain; that stretch reads HGSAAIVSEF…TKIHKVDTLV (184 aa).

The protein belongs to the MAD2 family. As to quaternary structure, part of the mitotic checkpoint complex (MCC); interacts with MAD1, CDC20-1, CDC20-2 and CDC20-5. Interacts with BUBR1 at chromocenters and with BUB3.1. Interacts with EIF4B3. Expressed in actively dividing tissues, early in organ development, in young leaves, lateral root primordia and root meristems.

Its subcellular location is the nucleus. It localises to the nucleus envelope. It is found in the chromosome. The protein localises to the centromere. The protein resides in the kinetochore. Its subcellular location is the cytoplasm. It localises to the cytoskeleton. It is found in the spindle. Its function is as follows. Required for the execution of the mitotic checkpoint which monitors the process of kinetochore-spindle attachment and delays the onset of anaphase when this process is not complete. It inhibits the activity of the anaphase promoting complex by sequestering CDC20 until all chromosomes are aligned at the metaphase plate. The protein is Mitotic spindle checkpoint protein MAD2 of Arabidopsis thaliana (Mouse-ear cress).